We begin with the raw amino-acid sequence, 99 residues long: Aspartyl/glutamyl-tRNA(Asn/Gln) amidotransferase subunit C (99 aa).

The protein belongs to the GatC family. Heterotrimer of A, B and C subunits.

It carries out the reaction L-glutamyl-tRNA(Gln) + L-glutamine + ATP + H2O = L-glutaminyl-tRNA(Gln) + L-glutamate + ADP + phosphate + H(+). The catalysed reaction is L-aspartyl-tRNA(Asn) + L-glutamine + ATP + H2O = L-asparaginyl-tRNA(Asn) + L-glutamate + ADP + phosphate + 2 H(+). In terms of biological role, allows the formation of correctly charged Asn-tRNA(Asn) or Gln-tRNA(Gln) through the transamidation of misacylated Asp-tRNA(Asn) or Glu-tRNA(Gln) in organisms which lack either or both of asparaginyl-tRNA or glutaminyl-tRNA synthetases. The reaction takes place in the presence of glutamine and ATP through an activated phospho-Asp-tRNA(Asn) or phospho-Glu-tRNA(Gln). The polypeptide is Aspartyl/glutamyl-tRNA(Asn/Gln) amidotransferase subunit C (Paraburkholderia xenovorans (strain LB400)).